The following is a 217-amino-acid chain: Thiamine-phosphate synthase (217 aa).

4-amino-2-methyl-5-(diphosphooxymethyl)pyrimidine is bound by residues 38-42 (QYRDK) and Asn-70. Asp-71 and Asp-90 together coordinate Mg(2+). Ser-109 serves as a coordination point for 4-amino-2-methyl-5-(diphosphooxymethyl)pyrimidine. 136–138 (SIT) serves as a coordination point for 2-[(2R,5Z)-2-carboxy-4-methylthiazol-5(2H)-ylidene]ethyl phosphate. 4-amino-2-methyl-5-(diphosphooxymethyl)pyrimidine is bound at residue Lys-139. Gly-166 contacts 2-[(2R,5Z)-2-carboxy-4-methylthiazol-5(2H)-ylidene]ethyl phosphate.

It belongs to the thiamine-phosphate synthase family. Requires Mg(2+) as cofactor.

The enzyme catalyses 2-[(2R,5Z)-2-carboxy-4-methylthiazol-5(2H)-ylidene]ethyl phosphate + 4-amino-2-methyl-5-(diphosphooxymethyl)pyrimidine + 2 H(+) = thiamine phosphate + CO2 + diphosphate. It catalyses the reaction 2-(2-carboxy-4-methylthiazol-5-yl)ethyl phosphate + 4-amino-2-methyl-5-(diphosphooxymethyl)pyrimidine + 2 H(+) = thiamine phosphate + CO2 + diphosphate. The catalysed reaction is 4-methyl-5-(2-phosphooxyethyl)-thiazole + 4-amino-2-methyl-5-(diphosphooxymethyl)pyrimidine + H(+) = thiamine phosphate + diphosphate. It functions in the pathway cofactor biosynthesis; thiamine diphosphate biosynthesis; thiamine phosphate from 4-amino-2-methyl-5-diphosphomethylpyrimidine and 4-methyl-5-(2-phosphoethyl)-thiazole: step 1/1. In terms of biological role, condenses 4-methyl-5-(beta-hydroxyethyl)thiazole monophosphate (THZ-P) and 2-methyl-4-amino-5-hydroxymethyl pyrimidine pyrophosphate (HMP-PP) to form thiamine monophosphate (TMP). In Nitrosococcus oceani (strain ATCC 19707 / BCRC 17464 / JCM 30415 / NCIMB 11848 / C-107), this protein is Thiamine-phosphate synthase.